We begin with the raw amino-acid sequence, 115 residues long: Large ribosomal subunit protein P2z (115 aa).

Positions 62-115 are disordered; the sequence is LASVPSGGGGGVAVASATSGGGGGGGAPAAESKKEEKKEEKEESDDDMGFSLFE. Residues 92–102 show a composition bias toward basic and acidic residues; it reads ESKKEEKKEEK. Phosphoserine is present on S105.

The protein belongs to the eukaryotic ribosomal protein P1/P2 family. In terms of assembly, P1 and P2 exist as dimers at the large ribosomal subunit. In terms of processing, phosphorylated.

Its function is as follows. Plays an important role in the elongation step of protein synthesis. The chain is Large ribosomal subunit protein P2z (RPP2A) from Arabidopsis thaliana (Mouse-ear cress).